The sequence spans 921 residues: DNA mismatch repair protein MutS 1 (921 aa).

619 to 626 (GPNMSGKS) is a binding site for ATP. Positions 837–887 (FRDGAAQSGGAAAGSTAEPVATDGDPEHAPGEAAAEGPKGDERAASLDSET) are disordered. Low complexity predominate over residues 840–853 (GAAQSGGAAAGSTA).

It belongs to the DNA mismatch repair MutS family.

Its function is as follows. This protein is involved in the repair of mismatches in DNA. It is possible that it carries out the mismatch recognition step. This protein has a weak ATPase activity. The chain is DNA mismatch repair protein MutS 1 from Haloarcula marismortui (strain ATCC 43049 / DSM 3752 / JCM 8966 / VKM B-1809) (Halobacterium marismortui).